The sequence spans 366 residues: Protein-glutamate methylesterase/protein-glutamine glutaminase 2 (366 aa).

A Response regulatory domain is found at 3–119 (RLLIADDSAL…SLELDRLRPL (117 aa)). Asp-53 carries the 4-aspartylphosphate modification. The interval 149 to 168 (AASSPRAKAARRGAARQRAK) is disordered. Over residues 156-166 (KAARRGAARQR) the composition is skewed to basic residues. The CheB-type methylesterase domain maps to 171-363 (PAPGLVLIGT…AAVIEWGNAD (193 aa)). Residues Ser-181, His-208, and Asp-305 contribute to the active site.

This sequence belongs to the CheB family. Post-translationally, phosphorylated by CheA. Phosphorylation of the N-terminal regulatory domain activates the methylesterase activity.

It localises to the cytoplasm. It carries out the reaction [protein]-L-glutamate 5-O-methyl ester + H2O = L-glutamyl-[protein] + methanol + H(+). The enzyme catalyses L-glutaminyl-[protein] + H2O = L-glutamyl-[protein] + NH4(+). Involved in chemotaxis. Part of a chemotaxis signal transduction system that modulates chemotaxis in response to various stimuli. Catalyzes the demethylation of specific methylglutamate residues introduced into the chemoreceptors (methyl-accepting chemotaxis proteins or MCP) by CheR. Also mediates the irreversible deamidation of specific glutamine residues to glutamic acid. The chain is Protein-glutamate methylesterase/protein-glutamine glutaminase 2 from Rhodopseudomonas palustris (strain BisB18).